A 141-amino-acid chain; its full sequence is Nucleoside diphosphate kinase (141 aa).

Residues Lys-11, Phe-59, Arg-87, Thr-93, Arg-104, and Asn-114 each coordinate ATP. His-117 functions as the Pros-phosphohistidine intermediate in the catalytic mechanism.

This sequence belongs to the NDK family. Homotetramer. Requires Mg(2+) as cofactor.

It localises to the cytoplasm. The catalysed reaction is a 2'-deoxyribonucleoside 5'-diphosphate + ATP = a 2'-deoxyribonucleoside 5'-triphosphate + ADP. It carries out the reaction a ribonucleoside 5'-diphosphate + ATP = a ribonucleoside 5'-triphosphate + ADP. In terms of biological role, major role in the synthesis of nucleoside triphosphates other than ATP. The ATP gamma phosphate is transferred to the NDP beta phosphate via a ping-pong mechanism, using a phosphorylated active-site intermediate. The polypeptide is Nucleoside diphosphate kinase (Haemophilus influenzae (strain 86-028NP)).